The primary structure comprises 1356 residues: Transmembrane protein 94 (1356 aa).

Topologically, residues 1–64 (MDLKEKHLGE…FLHHSNRCSC (64 aa)) are cytoplasmic. The helical transmembrane segment at 65-85 (FHWPGASLMLLAVLLLLGCCG) threads the bilayer. The Lumenal segment spans residues 86–92 (GQPAGSR). A helical transmembrane segment spans residues 93 to 113 (GVGLVNASALFLLLLLNLVLI). Residues 114-273 (GRQDRLKRRE…RPVTALDNER (160 aa)) lie on the Cytoplasmic side of the membrane. 2 positions are modified to phosphoserine: Ser221 and Ser225. The chain crosses the membrane as a helical span at residues 274 to 294 (FTVQSVMLHYAVPVVLAGFLI). The Lumenal portion of the chain corresponds to 295 to 320 (TNALRFIFSAPGVTSWQYTLLQLQVN). A helical transmembrane segment spans residues 321–341 (GVLPILPLLFPVLWVLATACG). The Cytoplasmic portion of the chain corresponds to 342-1092 (EARVLAQMSK…RHATYGIRKC (751 aa)). A DKQGIL motif is present at residues 417 to 422 (DKQGIL). Disordered stretches follow at residues 439-461 (VEPP…FCHP) and 483-541 (EQER…ESDP). The segment covering 440–449 (EPPHSSHEDL) has biased composition (basic and acidic residues). A phosphoserine mark is found at Ser444, Ser445, and Ser454. A compositionally biased stretch (basic residues) spans 502 to 511 (HHKAHGRSKH). Phosphoserine is present on residues Ser513, Ser518, Ser798, and Ser941. A helical transmembrane segment spans residues 1093-1113 (FLFLLQCQLTLVVIQFLSCLV). Over 1114–1120 (QLPPLLS) the chain is Lumenal. A helical membrane pass occupies residues 1121–1141 (TTDILWLSCFCYPLLSISLLG). The Cytoplasmic segment spans residues 1142-1167 (KPPHSSIMSMATGKNLQSIPKKTQHY). A helical membrane pass occupies residues 1168 to 1188 (FLLCFLLKFSLTISSCLICFG). The Lumenal segment spans residues 1189-1228 (FTLQSFCDSSRDRNLTNCSSVMLPSNDDRAPAWFEDFANG). 2 N-linked (GlcNAc...) asparagine glycosylation sites follow: Asn1202 and Asn1205. Residues 1229-1249 (LLSAQKLTAALIVLHTVFISI) traverse the membrane as a helical segment. The Cytoplasmic portion of the chain corresponds to 1250–1261 (THVHRTKPLWRK). Residues 1262-1282 (SPLTNLWWAVTVPVVLLGQVV) traverse the membrane as a helical segment. At 1283 to 1306 (QTAVDLQLWTHRDSHVHFGLEDVP) the chain is on the lumenal side. The helical transmembrane segment at 1307-1327 (LLTWLLGCLSLVLVVVTNEIV) threads the bilayer. At 1328–1356 (KLHEIRVRVRYQKRQKLQFETKLGMNSPF) the chain is on the cytoplasmic side. The GMN; metal-binding motif signature appears at 1351-1353 (GMN).

In terms of assembly, forms homooligomers. In terms of tissue distribution, expressed ubiquitously.

It is found in the endoplasmic reticulum membrane. Functionally, could function in the uptake of Mg(2+) from the cytosol into the endoplasmic reticulum and regulate intracellular Mg(2+) homeostasis. This is Transmembrane protein 94 from Homo sapiens (Human).